Reading from the N-terminus, the 605-residue chain is Granule-bound starch synthase 1, chloroplastic/amyloplastic (605 aa).

Residues 1-72 constitute a chloroplast transit peptide; it reads MAALATSQLV…GGRFPSLVVC (72 aa). Lys91 serves as a coordination point for ADP-alpha-D-glucose.

This sequence belongs to the glycosyltransferase 1 family. Bacterial/plant glycogen synthase subfamily.

It localises to the plastid. Its subcellular location is the chloroplast. The protein resides in the amyloplast. The enzyme catalyses an NDP-alpha-D-glucose + [(1-&gt;4)-alpha-D-glucosyl](n) = [(1-&gt;4)-alpha-D-glucosyl](n+1) + a ribonucleoside 5'-diphosphate + H(+). It functions in the pathway glycan biosynthesis; starch biosynthesis. In terms of biological role, required for the synthesis of amylose in endosperm. The chain is Granule-bound starch synthase 1, chloroplastic/amyloplastic (WAXY) from Zea mays (Maize).